Here is a 228-residue protein sequence, read N- to C-terminus: tRNA (guanine-N(1)-)-methyltransferase (228 aa).

S-adenosyl-L-methionine contacts are provided by residues G108 and V127–L132.

Belongs to the RNA methyltransferase TrmD family. Homodimer.

The protein localises to the cytoplasm. The enzyme catalyses guanosine(37) in tRNA + S-adenosyl-L-methionine = N(1)-methylguanosine(37) in tRNA + S-adenosyl-L-homocysteine + H(+). In terms of biological role, specifically methylates guanosine-37 in various tRNAs. The polypeptide is tRNA (guanine-N(1)-)-methyltransferase (Metamycoplasma arthritidis (strain 158L3-1) (Mycoplasma arthritidis)).